The chain runs to 104 residues: Large ribosomal subunit protein uL24 (104 aa).

It belongs to the universal ribosomal protein uL24 family. In terms of assembly, part of the 50S ribosomal subunit.

In terms of biological role, one of two assembly initiator proteins, it binds directly to the 5'-end of the 23S rRNA, where it nucleates assembly of the 50S subunit. One of the proteins that surrounds the polypeptide exit tunnel on the outside of the subunit. The polypeptide is Large ribosomal subunit protein uL24 (Shewanella halifaxensis (strain HAW-EB4)).